Here is a 63-residue protein sequence, read N- to C-terminus: Cytochrome b-c1 complex subunit 9 (63 aa).

Residues 2 to 21 (AAATLTSKLYSLLFRRTSTF) lie on the Mitochondrial matrix side of the membrane. The helical transmembrane segment at 22 to 47 (ALTIIVGVMFFERAFDQGADAIYDHI) threads the bilayer. Residues 48 to 63 (NEGKLWKHIKHKYENK) lie on the Mitochondrial intermembrane side of the membrane.

It belongs to the UQCR10/QCR9 family. In terms of assembly, component of the ubiquinol-cytochrome c oxidoreductase (cytochrome b-c1 complex, complex III, CIII), a multisubunit enzyme composed of 11 subunits. The complex is composed of 3 respiratory subunits cytochrome b, cytochrome c1 and Rieske protein UQCRFS1, 2 core protein subunits UQCRC1/QCR1 and UQCRC2/QCR2, and 6 low-molecular weight protein subunits UQCRH/QCR6, UQCRB/QCR7, UQCRQ/QCR8, UQCR10/QCR9, UQCR11/QCR10 and subunit 9, the cleavage product of Rieske protein UQCRFS1. The complex exists as an obligatory dimer and forms supercomplexes (SCs) in the inner mitochondrial membrane with NADH-ubiquinone oxidoreductase (complex I, CI) and cytochrome c oxidase (complex IV, CIV), resulting in different assemblies (supercomplex SCI(1)III(2)IV(1) and megacomplex MCI(2)III(2)IV(2)). Interacts with STMP1.

Its subcellular location is the mitochondrion inner membrane. Its function is as follows. Component of the ubiquinol-cytochrome c oxidoreductase, a multisubunit transmembrane complex that is part of the mitochondrial electron transport chain which drives oxidative phosphorylation. The respiratory chain contains 3 multisubunit complexes succinate dehydrogenase (complex II, CII), ubiquinol-cytochrome c oxidoreductase (cytochrome b-c1 complex, complex III, CIII) and cytochrome c oxidase (complex IV, CIV), that cooperate to transfer electrons derived from NADH and succinate to molecular oxygen, creating an electrochemical gradient over the inner membrane that drives transmembrane transport and the ATP synthase. The cytochrome b-c1 complex catalyzes electron transfer from ubiquinol to cytochrome c, linking this redox reaction to translocation of protons across the mitochondrial inner membrane, with protons being carried across the membrane as hydrogens on the quinol. In the process called Q cycle, 2 protons are consumed from the matrix, 4 protons are released into the intermembrane space and 2 electrons are passed to cytochrome c. This Homo sapiens (Human) protein is Cytochrome b-c1 complex subunit 9 (UQCR10).